We begin with the raw amino-acid sequence, 348 residues long: Protein pelota homolog (348 aa).

It belongs to the eukaryotic release factor 1 family. Pelota subfamily. Monomer. A divalent metal cation serves as cofactor.

It localises to the cytoplasm. Functionally, may function in recognizing stalled ribosomes, interact with stem-loop structures in stalled mRNA molecules, and effect endonucleolytic cleavage of the mRNA. May play a role in the release non-functional ribosomes and degradation of damaged mRNAs. Has endoribonuclease activity. This Methanococcus maripaludis (strain DSM 14266 / JCM 13030 / NBRC 101832 / S2 / LL) protein is Protein pelota homolog.